The primary structure comprises 60 residues: Large ribosomal subunit protein uL30 (60 aa).

It belongs to the universal ribosomal protein uL30 family. Part of the 50S ribosomal subunit.

This chain is Large ribosomal subunit protein uL30, found in Syntrophomonas wolfei subsp. wolfei (strain DSM 2245B / Goettingen).